Consider the following 175-residue polypeptide: Large ribosomal subunit protein uL16 (175 aa).

This sequence belongs to the universal ribosomal protein uL16 family.

The protein is Large ribosomal subunit protein uL16 of Caldivirga maquilingensis (strain ATCC 700844 / DSM 13496 / JCM 10307 / IC-167).